Reading from the N-terminus, the 180-residue chain is Large ribosomal subunit protein uL5 (180 aa).

Belongs to the universal ribosomal protein uL5 family. In terms of assembly, part of the 50S ribosomal subunit; part of the 5S rRNA/L5/L18/L25 subcomplex. Contacts the 5S rRNA and the P site tRNA. Forms a bridge to the 30S subunit in the 70S ribosome.

In terms of biological role, this is one of the proteins that bind and probably mediate the attachment of the 5S RNA into the large ribosomal subunit, where it forms part of the central protuberance. In the 70S ribosome it contacts protein S13 of the 30S subunit (bridge B1b), connecting the 2 subunits; this bridge is implicated in subunit movement. Contacts the P site tRNA; the 5S rRNA and some of its associated proteins might help stabilize positioning of ribosome-bound tRNAs. The chain is Large ribosomal subunit protein uL5 from Chlamydia felis (strain Fe/C-56) (Chlamydophila felis).